The primary structure comprises 279 residues: MMTAETTGRAACLIGWPAAHSRSPLIHHYWLRLHGITGGYSIEAIPPEGFAEFVMHLSTHGFAGANVTIPHKERALQLTEPDDRARAVGAANTLYYEGAVLRSTNTDVEGFISNLDVAAPSWDRTGDALVLGAGGASRAVVFGLVERGIGRIHLANRTVERARVLADQFGATVIPAAWNTLGDLLPRVGLLVNTTSLGMKGQPPLDIELALLPRDAVVADLVYVPLETPLLSAARARGLRTADGLGMLLHQAVRGFELWFGLRPAVTQELRALVEADLL.

Residues 21-23 and Thr68 each bind shikimate; that span reads SRS. The active-site Proton acceptor is Lys72. NADP(+) is bound at residue Asp83. Residues Asn92 and Asp107 each coordinate shikimate. NADP(+) contacts are provided by residues 132–136, 156–161, and Leu221; these read GAGGA and NRTVER. Shikimate is bound at residue Tyr223. Gly244 is a binding site for NADP(+).

The protein belongs to the shikimate dehydrogenase family. In terms of assembly, homodimer.

The enzyme catalyses shikimate + NADP(+) = 3-dehydroshikimate + NADPH + H(+). It participates in metabolic intermediate biosynthesis; chorismate biosynthesis; chorismate from D-erythrose 4-phosphate and phosphoenolpyruvate: step 4/7. Functionally, involved in the biosynthesis of the chorismate, which leads to the biosynthesis of aromatic amino acids. Catalyzes the reversible NADPH linked reduction of 3-dehydroshikimate (DHSA) to yield shikimate (SA). The sequence is that of Shikimate dehydrogenase (NADP(+)) from Nitrobacter winogradskyi (strain ATCC 25391 / DSM 10237 / CIP 104748 / NCIMB 11846 / Nb-255).